Consider the following 1259-residue polypeptide: MERDLYGDMADQPIPVGQGVQIRFINDLKENGKPRGKRSKQDSYGVAVRVQGIDGQPFVVLNSGDKAKSSYDYDRHYSERSSTLDTAYSQSSRESAWSRGSQKKTDNGEYPSLGYRSATSQQSTSASNKTNKNGLSTSSFSNQSSEDIDTKPLSSVDSLITKFDVKGQVRGRTARRSQALKDERKRSQSLDGRKNYQDTADSREISLQQQNEVPARRETVSSANRSFARQSLEREDINKTRLTKEWLDQGGEEPVIVKQQRSVQSEFQLKSTPDLLRDQQADGSDPTREMIFSILRDGSTENENNLRKKTSILLEKFPSLQAQPGEDTRSLGSQKKELERKVAELQRQLDDEMKQRMKLESSQGRPKAGMQRLEIQLEESKEECSRLKDLYDKKKNELNAVSQELMEVRMGKEQVETKLRAMEDKLMDSKEELSHLRAKGGTSPDKLALMKELEEVQDELDEVLQIRQKQEELLRQKDRELTALKGALKDEVANHDKDLDRVREQYQNDVQQLRKNMENVSQDQLSLETERQKINQVVRNLQRELEESSDEINQWKEMFQKNKEELRSTKQELLQMKMEKEESEDELKETKDRFSLLQSELEQAKKGSVDPGELASVRKELQRVQDQLKQLSVDKQKVEENLHQRERELSALKGALKEEVAGRGRETERLREQLQSEVVQFKKDNENLGRESQRIQDQLKQVLLEKQRHEEAVHQRERELSALKGALKDEVSGRDREAERLRAQFEQDAMQTKRSYEELVKINKRLESEKVDLERVRQVIENNLQESREENDDLRRKILGLEAQLKETNTFCDDLQRAESRLKDKITKLETERKRMEDTLGEAADQEQELAFVKRDLGNKLEEAQRSLKRLSLEYEELQECYQEEMKQKDHLKKTKNELEEQKRLLDKSMDKLTRELDNMSNESRGSLQVLQSQLEEFREKSRREIGEAQKQAKEKTAEAERHQFNSSRMQEEVQKLKLALQELQVEKETVELDKQMVTQRLQNLEQDTESKKRVQDDRSRQVKVLEDKLKRMEAELDEEKNTVELLSDRINRSREQMEQQRAELMQERARGQDLECDKISLERQNKDLKGRLANMEGQQKPSVNVSHLEAKLQDIQERLQSEEREKATLLSTNRKLERKLKELNIQLEDERLHVNDQKDQLNLRVKALKRQVDEAEEEIERLEGLRKKAVREMEEQQELNEQLQTRLKTMEKESKRKPIRPAHNDDDDLSSDGEYGGSYDPSSITSLLTESNLQTSSC.

Residues Met9–Pro324 are head. A ZIM motif is present at residues Gln41–Gly55. The span at Ser69–Glu79 shows a compositional bias: basic and acidic residues. Disordered regions lie at residues Ser69–Lys151, Val169–Leu232, Phe317–Leu338, Lys941–Arg969, and Arg1192–Cys1259. The segment covering Arg80–Gly100 has biased composition (polar residues). Low complexity predominate over residues Ser117–Ser127. The span at Asn128 to Ser145 shows a compositional bias: polar residues. Residues Ala179–Glu204 are compositionally biased toward basic and acidic residues. Residues Val220–Arg229 are compositionally biased toward polar residues. Residues Gly325–Lys1218 adopt a coiled-coil conformation. Positions Glu326–Leu338 are enriched in basic and acidic residues. The interval Ile1220 to Cys1259 is tail. Positions Asp1241–Cys1259 are enriched in polar residues.

This sequence belongs to the cingulin family. In terms of assembly, parallel homodimer. Interacts with TJP1/ZO1 and TJP2/ZO2.

The protein localises to the cell junction. Its subcellular location is the tight junction. Probably plays a role in the formation and regulation of the tight junction (TJ) paracellular permeability barrier, possibly by linking ZO proteins to the actomyosin cytoskeleton. The protein is Cingulin of Xenopus tropicalis (Western clawed frog).